Consider the following 218-residue polypeptide: Small ribosomal subunit protein uS3c (218 aa).

Residues 47 to 118 form the KH type-2 domain; it reads VRRHMKNYSN…KLNISIAKVA (72 aa).

It belongs to the universal ribosomal protein uS3 family. Part of the 30S ribosomal subunit.

The protein resides in the plastid. The protein localises to the chloroplast. This chain is Small ribosomal subunit protein uS3c (rps3), found in Ginkgo biloba (Ginkgo).